A 34-amino-acid polypeptide reads, in one-letter code: Photosystem II reaction center protein Psb30 (34 aa).

A helical transmembrane segment spans residues Q9 to L29.

It belongs to the Psb30/Ycf12 family. In terms of assembly, PSII is composed of 1 copy each of membrane proteins PsbA, PsbB, PsbC, PsbD, PsbE, PsbF, PsbH, PsbI, PsbJ, PsbK, PsbL, PsbM, PsbT, PsbX, PsbY, PsbZ, Psb30/Ycf12, peripheral proteins of the oxygen-evolving complex and a large number of cofactors. It forms dimeric complexes.

It is found in the plastid. The protein resides in the chloroplast thylakoid membrane. In terms of biological role, a core subunit of photosystem II (PSII), probably helps stabilize the reaction center. This chain is Photosystem II reaction center protein Psb30, found in Phaeodactylum tricornutum (strain CCAP 1055/1).